Consider the following 489-residue polypeptide: Adenosylhomocysteinase (489 aa).

Substrate is bound by residues Thr-68, Asp-151, and Glu-213. 214–216 contributes to the NAD(+) binding site; it reads TTT. Substrate contacts are provided by Lys-243 and Asp-247. Residues Asn-248, 277–282, Glu-300, Asn-335, 356–358, and Asn-403 each bind NAD(+); these read GYGDVG and IGH.

Belongs to the adenosylhomocysteinase family. It depends on NAD(+) as a cofactor.

It is found in the cytoplasm. The catalysed reaction is S-adenosyl-L-homocysteine + H2O = L-homocysteine + adenosine. The protein operates within amino-acid biosynthesis; L-homocysteine biosynthesis; L-homocysteine from S-adenosyl-L-homocysteine: step 1/1. May play a key role in the regulation of the intracellular concentration of adenosylhomocysteine. This Mycobacterium sp. (strain JLS) protein is Adenosylhomocysteinase.